Here is a 456-residue protein sequence, read N- to C-terminus: Perilipin-5 (456 aa).

The disordered stretch occupies residues 1-20; sequence MSEDEAAQAPGPSLSEQDQQ. The tract at residues 1 to 108 is interaction with LIPE; sequence MSEDEAAQAP…KLEEKLPFLQ (108 aa). Residues 1-173 are essential for lipid droplet targeting; the sequence is MSEDEAAQAP…HFLPMTEEEL (173 aa). Phosphoserine is present on residues Ser-2, Ser-148, and Ser-324. The tract at residues 185–456 is interaction with PNPLA2 and ABHD5; that stretch reads VGSVEEQRKH…KHTLMPELDF (272 aa). The interval 420 to 456 is disordered; that stretch reads AWQAQHGEGTVLSGNIPEEEPEPPSRPKHTLMPELDF. Residues 438 to 456 are recruits mitochondria at the lipid droplet surface; it reads EEPEPPSRPKHTLMPELDF.

Belongs to the perilipin family. As to quaternary structure, homooligomer. Interacts with PNPLA2; prevents interaction of PNPLA2 with ABHD5. Interacts with ABHD5; targets ABHD5 to lipid droplets and promotes interaction of ABHD5 with PNPLA2. Interacts with LIPE. Phosphorylated by PKA. Phosphorylated on serine in skeletal muscle at rest or upon lipolytic stimulation.

The protein localises to the lipid droplet. The protein resides in the cytoplasm. It is found in the mitochondrion. Lipid droplet-associated protein that maintains the balance between lipogenesis and lipolysis and also regulates fatty acid oxidation in oxidative tissues. Recruits mitochondria to the surface of lipid droplets and is involved in lipid droplet homeostasis by regulating both the storage of fatty acids in the form of triglycerides and the release of fatty acids for mitochondrial fatty acid oxidation. In lipid droplet triacylglycerol hydrolysis, plays a role as a scaffolding protein for three major key lipolytic players: ABHD5, PNPLA2 and LIPE. Reduces the triacylglycerol hydrolase activity of PNPLA2 by recruiting and sequestering PNPLA2 to lipid droplets. Phosphorylation by PKA enables lipolysis probably by promoting release of ABHD5 from the perilipin scaffold and by facilitating interaction of ABHD5 with PNPLA2. Also increases lipolysis through interaction with LIPE and upon PKA-mediated phosphorylation of LIPE. This chain is Perilipin-5 (Plin5), found in Ovis aries (Sheep).